Reading from the N-terminus, the 101-residue chain is Small ribosomal subunit protein uS14 (101 aa).

The protein belongs to the universal ribosomal protein uS14 family. In terms of assembly, part of the 30S ribosomal subunit. Contacts proteins S3 and S10.

Its function is as follows. Binds 16S rRNA, required for the assembly of 30S particles and may also be responsible for determining the conformation of the 16S rRNA at the A site. This chain is Small ribosomal subunit protein uS14, found in Cupriavidus pinatubonensis (strain JMP 134 / LMG 1197) (Cupriavidus necator (strain JMP 134)).